The primary structure comprises 100 residues: Nucleoid-associated protein Caur_0522 (100 aa).

It belongs to the YbaB/EbfC family. As to quaternary structure, homodimer.

The protein localises to the cytoplasm. The protein resides in the nucleoid. In terms of biological role, binds to DNA and alters its conformation. May be involved in regulation of gene expression, nucleoid organization and DNA protection. The chain is Nucleoid-associated protein Caur_0522 from Chloroflexus aurantiacus (strain ATCC 29366 / DSM 635 / J-10-fl).